The primary structure comprises 621 residues: Cyclic nucleotide-gated ion channel 11 (621 aa).

Over 1-43 the chain is Cytoplasmic; sequence MNLQRRKFVRLDSTGVDGKLKSVRGRLKKVYGKMKTLENWRKT. The chain crosses the membrane as a helical span at residues 44-64; sequence VLLACVVALAIDPLFLFIPLI. Residues 65-76 lie on the Extracellular side of the membrane; sequence DSQRFCFTFDKT. The chain crosses the membrane as a helical span at residues 77–97; sequence LVAVVCVIRTFIDTFYVIHII. The Cytoplasmic portion of the chain corresponds to 98–128; that stretch reads YYLITETIAPRSQASLRGEIVVHSKATLKTR. The chain crosses the membrane as a helical span at residues 129–149; it reads LLFHFIVDIISVLPIPQVVVL. At 150–162 the chain is on the extracellular side; the sequence is TLIPLSASLVSER. Residues 163 to 183 form a helical membrane-spanning segment; that stretch reads ILKWIILSQYVPRIIRMYPLY. Topologically, residues 184 to 198 are cytoplasmic; that stretch reads KEVTRAFGTVAESKR. The chain crosses the membrane as a helical span at residues 199–219; the sequence is VGAALNFFLYMLHSYVCGAFW. Over 220–329 the chain is Extracellular; sequence YLSSIERKST…QNLETSNSAG (110 aa). A helical transmembrane segment spans residues 330 to 350; that stretch reads EIFFAIIICVSGLLLFAVLIG. Residues 351–621 are Cytoplasmic-facing; that stretch reads NVQKYLQSST…KLNLGAAIYA (271 aa). A nucleoside 3',5'-cyclic phosphate is bound by residues 435-556 and Asp506; that span reads LLQA…HSKQ. Positions 549–564 are calmodulin-binding; that stretch reads YRRLHSKQLQHMFRFY. Residues 569-598 enclose the IQ domain; it reads QTWAACFIQAAWKRHCRRKLSKALREEEGK.

The protein belongs to the cyclic nucleotide-gated cation channel (TC 1.A.1.5) family. Homotetramer or heterotetramer.

It is found in the cell membrane. Functionally, putative cyclic nucleotide-gated ion channel. In Arabidopsis thaliana (Mouse-ear cress), this protein is Cyclic nucleotide-gated ion channel 11 (CNGC11).